The sequence spans 265 residues: Tryptophan synthase alpha chain (265 aa).

Residues E45 and D56 each act as proton acceptor in the active site.

Belongs to the TrpA family. As to quaternary structure, tetramer of two alpha and two beta chains.

The catalysed reaction is (1S,2R)-1-C-(indol-3-yl)glycerol 3-phosphate + L-serine = D-glyceraldehyde 3-phosphate + L-tryptophan + H2O. Its pathway is amino-acid biosynthesis; L-tryptophan biosynthesis; L-tryptophan from chorismate: step 5/5. The alpha subunit is responsible for the aldol cleavage of indoleglycerol phosphate to indole and glyceraldehyde 3-phosphate. This is Tryptophan synthase alpha chain from Halalkalibacterium halodurans (strain ATCC BAA-125 / DSM 18197 / FERM 7344 / JCM 9153 / C-125) (Bacillus halodurans).